The sequence spans 142 residues: MDLPEDQARFTNSYSLRTTSMETPREVSRSGRLYQSASRSQMAYSRPTMSIISRTSSWRTSPRPLPPPQVPSLMNSILTSRTQQSSPKLTNSASPNLRRKSSLGRLSMDRHGTTLQRTNSGFSTKETEMPRLLDRSESLSRY.

The interval 1-142 (MDLPEDQARF…LDRSESLSRY (142 aa)) is disordered. Polar residues-rich tracts occupy residues 9–22 (RFTNSYSLRTTSME) and 33–43 (LYQSASRSQMA). The segment covering 50–62 (SIISRTSSWRTSP) has biased composition (low complexity). 2 stretches are compositionally biased toward polar residues: residues 74-95 (MNSILTSRTQQSSPKLTNSASP) and 113-124 (TTLQRTNSGFST). The span at 125 to 142 (KETEMPRLLDRSESLSRY) shows a compositional bias: basic and acidic residues.

It belongs to the luteoviruses movement protein family.

Transports viral genome to neighboring plant cells directly through plasmosdesmata, without any budding. The movement protein allows efficient cell to cell propagation, by bypassing the host cell wall barrier. This is Movement protein from Cicer arietinum (Chickpea).